The chain runs to 324 residues: Glutathione synthetase (324 aa).

Positions 125-312 constitute an ATP-grasp domain; that stretch reads EKLFTTTHFP…ISTIILDNLE (188 aa). An ATP-binding site is contributed by 152 to 209; that stretch reads FIKTYKDIIIKPLHGMAGLSIFRIKEHDPNTSVIIETMTKYETIPCISQNYITDIQKG. The Mg(2+) site is built by E283 and N285.

Belongs to the prokaryotic GSH synthase family. Mg(2+) serves as cofactor. Mn(2+) is required as a cofactor.

It carries out the reaction gamma-L-glutamyl-L-cysteine + glycine + ATP = glutathione + ADP + phosphate + H(+). It participates in sulfur metabolism; glutathione biosynthesis; glutathione from L-cysteine and L-glutamate: step 2/2. The protein is Glutathione synthetase of Buchnera aphidicola subsp. Baizongia pistaciae (strain Bp).